An 832-amino-acid polypeptide reads, in one-letter code: Protein P (832 aa).

A terminal protein domain (TP) region spans residues 1–177 (MPLSCPHFRK…FCGSPYSWEQ (177 aa)). Positions 178–335 (ELQHGAEPVC…YCLSHLVNLL (158 aa)) are spacer. Positions 208–224 (KQSRLGLQSQQRQLARS) are enriched in low complexity. The tract at residues 208–241 (KQSRLGLQSQQRQLARSHQGRSGSIRARVHSTTR) is disordered. The tract at residues 336–679 (EDWGPCTEHG…YLTLYPVARQ (344 aa)) is polymerase/reverse transcriptase domain (RT). Positions 346–589 (EHHIRIPRTP…YSLNFMGYII (244 aa)) constitute a Reverse transcriptase domain. 3 residues coordinate Mg(2+): aspartate 418, aspartate 540, and aspartate 541.

Belongs to the hepadnaviridae P protein family.

It catalyses the reaction DNA(n) + a 2'-deoxyribonucleoside 5'-triphosphate = DNA(n+1) + diphosphate. It carries out the reaction Endonucleolytic cleavage to 5'-phosphomonoester.. With respect to regulation, activated by host HSP70 and HSP40 in vitro to be able to bind the epsilon loop of the pgRNA. Because deletion of the RNase H region renders the protein partly chaperone-independent, the chaperones may be needed indirectly to relieve occlusion of the RNA-binding site by this domain. Inhibited by several reverse-transcriptase inhibitors: Lamivudine, Adefovir and Entecavir. Multifunctional enzyme that converts the viral RNA genome into dsDNA in viral cytoplasmic capsids. This enzyme displays a DNA polymerase activity that can copy either DNA or RNA templates, and a ribonuclease H (RNase H) activity that cleaves the RNA strand of RNA-DNA heteroduplexes in a partially processive 3'- to 5'-endonucleasic mode. Neo-synthesized pregenomic RNA (pgRNA) are encapsidated together with the P protein, and reverse-transcribed inside the nucleocapsid. Initiation of reverse-transcription occurs first by binding the epsilon loop on the pgRNA genome, and is initiated by protein priming, thereby the 5'-end of (-)DNA is covalently linked to P protein. Partial (+)DNA is synthesized from the (-)DNA template and generates the relaxed circular DNA (RC-DNA) genome. After budding and infection, the RC-DNA migrates in the nucleus, and is converted into a plasmid-like covalently closed circular DNA (cccDNA). The activity of P protein does not seem to be necessary for cccDNA generation, and is presumably released from (+)DNA by host nuclear DNA repair machinery. This is Protein P from Gibbon hepatitis B virus subtype ayw3q (isolate Hope) (HBVgbn).